Consider the following 127-residue polypeptide: Small ribosomal subunit protein uS11 (127 aa).

The protein belongs to the universal ribosomal protein uS11 family. Part of the 30S ribosomal subunit. Interacts with proteins S7 and S18. Binds to IF-3.

In terms of biological role, located on the platform of the 30S subunit, it bridges several disparate RNA helices of the 16S rRNA. Forms part of the Shine-Dalgarno cleft in the 70S ribosome. This is Small ribosomal subunit protein uS11 from Streptococcus mutans serotype c (strain ATCC 700610 / UA159).